The following is a 366-amino-acid chain: Histone-lysine N-methyltransferase SETD7 (366 aa).

3 MORN repeats span residues 36–58 (FEGNFVHGEKNGRGKFFFFDGST), 59–81 (LEGYYVDDALQGQGVYTYEDGGV), and 106–128 (FKGQYKDNIRHGVCWIYYPDGGS). The 123-residue stretch at 214 to 336 (ERVYVAESLI…ADEELTVAYG (123 aa)) folds into the SET domain. S-adenosyl-L-methionine-binding positions include 226 to 228 (AGE), N296, H297, and E356.

Belongs to the class V-like SAM-binding methyltransferase superfamily. Histone-lysine methyltransferase family. SET7 subfamily. In terms of assembly, interacts with IPF1/PDX-1. In terms of tissue distribution, widely expressed. Expressed in pancreatic islets.

It is found in the nucleus. The protein localises to the chromosome. The catalysed reaction is L-lysyl(4)-[histone H3] + S-adenosyl-L-methionine = N(6)-methyl-L-lysyl(4)-[histone H3] + S-adenosyl-L-homocysteine + H(+). It catalyses the reaction L-lysyl-[protein] + S-adenosyl-L-methionine = N(6)-methyl-L-lysyl-[protein] + S-adenosyl-L-homocysteine + H(+). Its function is as follows. Histone methyltransferase that specifically monomethylates 'Lys-4' of histone H3. H3 'Lys-4' methylation represents a specific tag for epigenetic transcriptional activation. Plays a central role in the transcriptional activation of genes such as collagenase or insulin. Recruited by IPF1/PDX-1 to the insulin promoter, leading to activate transcription. Also has methyltransferase activity toward non-histone proteins such as CGAS, p53/TP53, TAF10, and possibly TAF7 by recognizing and binding the [KR]-[STA]-K in substrate proteins. Monomethylates 'Lys-189' of TAF10, leading to increase the affinity of TAF10 for RNA polymerase II. Monomethylates 'Lys-372' of p53/TP53, stabilizing p53/TP53 and increasing p53/TP53-mediated transcriptional activation. Monomethylates 'Lys-491' of CGAS, promoting interaction between SGF29 and CGAS. The protein is Histone-lysine N-methyltransferase SETD7 (SETD7) of Homo sapiens (Human).